A 707-amino-acid polypeptide reads, in one-letter code: Polyribonucleotide nucleotidyltransferase (707 aa).

Asp488 and Asp494 together coordinate Mg(2+). The region spanning 554-613 is the KH domain; that stretch reads PRLFTMKINQDKIREVIGKGGETIRSITAETGTEINIAEDGTITIAATTQEAGDAAKKRI. The S1 motif domain maps to 623–693; the sequence is GKVYEGTVVK…DRGRVRLSIK (71 aa).

The protein belongs to the polyribonucleotide nucleotidyltransferase family. Requires Mg(2+) as cofactor.

Its subcellular location is the cytoplasm. It carries out the reaction RNA(n+1) + phosphate = RNA(n) + a ribonucleoside 5'-diphosphate. In terms of biological role, involved in mRNA degradation. Catalyzes the phosphorolysis of single-stranded polyribonucleotides processively in the 3'- to 5'-direction. This Neisseria meningitidis serogroup B (strain ATCC BAA-335 / MC58) protein is Polyribonucleotide nucleotidyltransferase.